Consider the following 877-residue polypeptide: Clumping factor B (877 aa).

A signal peptide spans 1–44 (MKKRIDYLSNKQNKYSIRRFTVGTTSVIVGATILFGIGNHQAQA). Residues 15–26 (YSIRRFTVGTTS) carry the YSIRK-G/S signaling motif motif. 2 stretches are compositionally biased toward polar residues: residues 44–61 (ASEQ…NASA) and 68–95 (MIET…NVDS). Positions 44-192 (ASEQSNDTTQ…QGTSKPSVRT (149 aa)) are disordered. Positions 45-542 (SEQSNDTTQS…GSADGDSAVN (498 aa)) are ligand binding A region. The span at 96-119 (TTKPMSTQTSNTTTTEPASTNETP) shows a compositional bias: low complexity. Polar residues predominate over residues 120 to 189 (QPTAIKNQAT…SNAQGTSKPS (70 aa)). The short motif at 272–276 (DYSNS) is the MIDAS-like motif element. Residues 530–849 (YGGGSADGDS…ETGDKSENTN (320 aa)) form a disordered region. Pro residues predominate over residues 545–555 (DPTPGPPVDPE). Positions 556 to 801 (PSPDPEPEPT…SDSDSDSDSD (246 aa)) are enriched in acidic residues. Positions 805–816 (RVTPPNNEQKAP) are enriched in polar residues. Residues 833 to 846 (HKTDALPETGDKSE) show a composition bias toward basic and acidic residues. Residues 838 to 842 (LPETG) carry the LPXTG sorting signal motif. Threonine 841 is subject to Pentaglycyl murein peptidoglycan amidated threonine. Residues 842–877 (GDKSENTNATLFGAMMALLGSLLLFRKRKQDHKEKA) constitute a propeptide, removed by sortase.

It belongs to the serine-aspartate repeat-containing protein (SDr) family. Proteolytically cleaved by aureolysin (aur). This cleavage leads to the inactivation of ClfB.

The protein localises to the secreted. It localises to the cell wall. Functionally, cell surface-associated protein implicated in virulence by promoting bacterial attachment to both alpha- and beta-chains of human fibrinogen and inducing the formation of bacterial clumps. Partly responsible for mediating bacterial attachment to the highly keratinized squamous epithelial cells from the nasal cavity via an interaction with cytokeratin K10 (K10). Also promotes bacterial attachment to cultured keratinocytes, possibly through an interaction with cytokeratin K10. Binds mouse cytokeratin K10. Activates human platelet aggregation. The polypeptide is Clumping factor B (clfB) (Staphylococcus aureus (strain NCTC 8325 / PS 47)).